We begin with the raw amino-acid sequence, 320 residues long: Agamous-like MADS-box protein AGL90 (320 aa).

In terms of domain architecture, MADS-box spans methionine 1–arginine 59. A coiled-coil region spans residues lysine 80–methionine 115.

Interacts with AGL62.

It localises to the nucleus. Functionally, probable transcription factor. This is Agamous-like MADS-box protein AGL90 (AGL90) from Arabidopsis thaliana (Mouse-ear cress).